A 376-amino-acid polypeptide reads, in one-letter code: TraB domain-containing protein (376 aa).

The residue at position 1 (Met1) is an N-acetylmethionine. Thr64 carries the phosphothreonine modification.

This chain is TraB domain-containing protein (Trabd), found in Mus musculus (Mouse).